The chain runs to 637 residues: ATP-dependent rRNA helicase SPB4 (637 aa).

Residues 14-42 carry the Q motif motif; the sequence is WDTLNPPLSEWIRDAVATMGFDQMTPVQA. Residues 45–247 form the Helicase ATP-binding domain; sequence LPHFMGNKDV…RVGLRNPVKI (203 aa). 58-65 contacts ATP; that stretch reads AVTGSGKT. Positions 195–198 match the DEAD box motif; sequence DEAD. The 156-residue stretch at 283-438 folds into the Helicase C-terminal domain; sequence ALAELLRQLP…TITTSEDDAA (156 aa). Residues 524–631 adopt a coiled-coil conformation; that stretch reads KEKTREQQRK…AAAKQEKDGE (108 aa). 4 stretches are compositionally biased toward basic and acidic residues: residues 535 to 553, 563 to 576, 583 to 618, and 625 to 637; these read ALEEEKSGVKKQDKSEEFK, SAKHEKEDDRVERR, RDAEATSKMTDDEKVKQMELNDLIAEVRRQNREKAA, and KQEKDGEFKGFDD. The disordered stretch occupies residues 535-637; the sequence is ALEEEKSGVK…KDGEFKGFDD (103 aa).

This sequence belongs to the DEAD box helicase family. DDX55/SPB4 subfamily. As to quaternary structure, component of pre-60S ribosomal complexes.

Its subcellular location is the nucleus. The protein localises to the nucleolus. It carries out the reaction ATP + H2O = ADP + phosphate + H(+). ATP-binding RNA helicase involved in the biogenesis of 60S ribosomal subunits. Binds 90S pre-ribosomal particles and dissociates from pre-60S ribosomal particles after processing of 27SB pre-rRNA. Required for the normal formation of 18S rRNA through the processing of pre-rRNAs at sites A0, A1 and A2, and the normal formation of 25S and 5.8S rRNAs through the processing of pre-rRNAs at sites C1 and C2. This Gibberella zeae (strain ATCC MYA-4620 / CBS 123657 / FGSC 9075 / NRRL 31084 / PH-1) (Wheat head blight fungus) protein is ATP-dependent rRNA helicase SPB4.